Consider the following 161-residue polypeptide: Small ribosomal subunit protein bS16 (161 aa).

Residues 114–161 form a disordered region; it reads EGGPTTEATKPKKKSPAKKAKGGEGDADAAAEKVEASAEGEQTESAES. Over residues 124–133 the composition is skewed to basic residues; the sequence is PKKKSPAKKA.

This sequence belongs to the bacterial ribosomal protein bS16 family.

This is Small ribosomal subunit protein bS16 from Mycobacterium marinum (strain ATCC BAA-535 / M).